We begin with the raw amino-acid sequence, 268 residues long: MNTFSPQQHTENRLRWSPALKGLPPLVSIAFPALIYLIFGKDRFEENPFLKFITLLLPLSYSAAHHLFLVHTSWNRSNKPEGILHSISYYTLNLLLLTFATISILSIIAFPFDEWEGDDSYYCSIILPSFFMPSVYLLSTSCCLVPGRIGFTDTGINVPIGMSILLCPAVSFVLVCKESEYHLLPAILFPILILIRLFKEKCFPSEKNALPTAPWRTAIFVFILILSIFIYTLMARVFVISLYDYLSRTVFYSNTAPVLRPDRILSLL.

Belongs to the UPF0328 family.

The chain is UPF0328 protein ECU05_1640/ECU11_0090 from Encephalitozoon cuniculi (strain GB-M1) (Microsporidian parasite).